Reading from the N-terminus, the 196-residue chain is Transmembrane 4 L6 family member 5 (196 aa).

Topologically, residues 1-9 (MCTGKCARF) are cytoplasmic. The chain crosses the membrane as a helical span at residues 10-30 (VGLSLIPLSLVCIVANALLLV). Residues 31–45 (PNGQTTWTKDHLSLQ) lie on the Extracellular side of the membrane. The helical transmembrane segment at 46-66 (VWLMAGFVGGGLMVLCPGISA) threads the bilayer. The Cytoplasmic segment spans residues 67–89 (VRAGGKGCCGAGCCGNRCRMLRS). Residues 90–110 (VFCSAIGLLGAIYCLSVSGTG) traverse the membrane as a helical segment. The segment at 90 to 196 (VFCSAIGLLG…DCRKKQGSSQ (107 aa)) is interaction with MTOR and CASTOR1. Topologically, residues 111 to 156 (LRIGPQCLMNGSWDYHFQDTAGSYLLNRTQWNLCVEPPDVVLWNVT) are extracellular. Asparagine 120 carries an N-linked (GlcNAc...) asparagine glycan. 123–128 (WDYHFQ) is a binding site for L-arginine. N-linked (GlcNAc...) asparagine glycosylation is found at asparagine 137 and asparagine 154. Residues 157-177 (LFSLLVAASCLEILLCGVQLV) traverse the membrane as a helical segment. Topologically, residues 178–196 (NASIGVLCGDCRKKQGSSQ) are cytoplasmic.

This sequence belongs to the L6 tetraspanin family. In terms of assembly, interacts with MTOR; the interaction is positively regulated by arginine and is negatively regulated by leucine. Interacts with SLC38A9. Interacts with SLC7A1; the interaction is negatively regulated by arginine. Interacts with CASTOR1; the interaction is positively regulated by leucine and is negatively regulated by arginine.

The protein localises to the lysosome membrane. It is found in the cell membrane. Acts as a lysosomal membrane arginine sensor. Forms a complex with MTOR and SLC38A9 on lysosomal membranes in an arginine-regulated manner, leading to arginine efflux which enables the activation of mTORC1 which subsequently leads to RPS6KB1 and EIF4EBP1 phosphorylations. Facilitates cell cycle G1/S phase progression and the translocation of the CDK4-CCND1 complex into the nucleus. CDKN1B and RHOA/ROCK signaling activity are involved in TM4SF5-mediated acceleration of G1/S phase progression. This is Transmembrane 4 L6 family member 5 (TM4SF5) from Bos taurus (Bovine).